A 144-amino-acid chain; its full sequence is Large ribosomal subunit protein uL16 (144 aa).

Positions 1–16 (MLQPKKTKFRRQQKGR) are enriched in basic residues. The disordered stretch occupies residues 1-22 (MLQPKKTKFRRQQKGRMKGEAQ).

It belongs to the universal ribosomal protein uL16 family. Part of the 50S ribosomal subunit.

Functionally, binds 23S rRNA and is also seen to make contacts with the A and possibly P site tRNAs. This chain is Large ribosomal subunit protein uL16, found in Parabacteroides distasonis (strain ATCC 8503 / DSM 20701 / CIP 104284 / JCM 5825 / NCTC 11152).